The primary structure comprises 587 residues: Heavy metal-associated isoprenylated plant protein 33 (587 aa).

Positions 9–72 (IQTCVLKVNI…KLLKSGKHAE (64 aa)) constitute an HMA domain. Residues cysteine 20 and cysteine 23 each coordinate a metal cation. Disordered regions lie at residues 98 to 146 (QIDH…MVIP), 176 to 261 (LKLP…KPMM), 287 to 449 (AHKN…PMSN), 462 to 504 (PGGG…QQQQ), and 532 to 587 (YARP…CNIM). Gly residues-rich tracts occupy residues 104 to 113 (KGGGGGGGGP) and 121 to 140 (KIGGGGGGGGGGGGGGGGGP). The span at 194–208 (PMNKNPQMPNNPNQK) shows a compositional bias: low complexity. The segment covering 215 to 248 (PDDDDEEDFSDEFDDEFDEDDDEFDDDLEDDEFD) has biased composition (acidic residues). Composition is skewed to gly residues over residues 290–300 (NGGGPGPAGGK), 312–419 (MGGG…GGGP), and 428–445 (GAMGGPMGSLPQMGGGPG). A compositionally biased stretch (low complexity) spans 471–483 (SAEAPPGYFQGQV). Pro residues-rich tracts occupy residues 534-547 (RPPPAVNYMPPQPQ) and 554-565 (YPYPYPYPPQYP). Over residues 578–587 (DENTSSCNIM) the composition is skewed to polar residues. Cysteine methyl ester is present on cysteine 584. Cysteine 584 carries S-farnesyl cysteine lipidation. Positions 585–587 (NIM) are cleaved as a propeptide — removed in mature form.

The protein belongs to the HIPP family.

Heavy-metal-binding protein. The chain is Heavy metal-associated isoprenylated plant protein 33 from Arabidopsis thaliana (Mouse-ear cress).